The following is a 148-amino-acid chain: 3-dehydroquinate dehydratase (148 aa).

The active-site Proton acceptor is the Tyr23. Substrate contacts are provided by Asn75, His81, and Asp88. The active-site Proton donor is His101. Residues 102-103 and Arg112 contribute to the substrate site; that span reads LS.

Belongs to the type-II 3-dehydroquinase family. As to quaternary structure, homododecamer.

It carries out the reaction 3-dehydroquinate = 3-dehydroshikimate + H2O. It functions in the pathway metabolic intermediate biosynthesis; chorismate biosynthesis; chorismate from D-erythrose 4-phosphate and phosphoenolpyruvate: step 3/7. In terms of biological role, catalyzes a trans-dehydration via an enolate intermediate. This chain is 3-dehydroquinate dehydratase, found in Xanthomonas campestris pv. campestris (strain B100).